The chain runs to 1333 residues: DNA-directed RNA polymerase subunit beta' (1333 aa).

Positions 60, 62, 75, and 78 each coordinate Zn(2+). Residues D535, D537, and D539 each contribute to the Mg(2+) site. The Zn(2+) site is built by C901, C983, C990, and C993.

The protein belongs to the RNA polymerase beta' chain family. In terms of assembly, the RNAP catalytic core consists of 2 alpha, 1 beta, 1 beta' and 1 omega subunit. When a sigma factor is associated with the core the holoenzyme is formed, which can initiate transcription. Requires Mg(2+) as cofactor. The cofactor is Zn(2+).

It carries out the reaction RNA(n) + a ribonucleoside 5'-triphosphate = RNA(n+1) + diphosphate. Functionally, DNA-dependent RNA polymerase catalyzes the transcription of DNA into RNA using the four ribonucleoside triphosphates as substrates. The chain is DNA-directed RNA polymerase subunit beta' from Corynebacterium glutamicum (strain ATCC 13032 / DSM 20300 / JCM 1318 / BCRC 11384 / CCUG 27702 / LMG 3730 / NBRC 12168 / NCIMB 10025 / NRRL B-2784 / 534).